The primary structure comprises 85 residues: Large ribosomal subunit protein eL34 (85 aa).

It belongs to the eukaryotic ribosomal protein eL34 family.

The polypeptide is Large ribosomal subunit protein eL34 (Saccharolobus islandicus (strain Y.N.15.51 / Yellowstone #2) (Sulfolobus islandicus)).